A 206-amino-acid polypeptide reads, in one-letter code: Large ribosomal subunit protein uL13w (206 aa).

The protein belongs to the universal ribosomal protein uL13 family.

The protein is Large ribosomal subunit protein uL13w (RPL13AD) of Arabidopsis thaliana (Mouse-ear cress).